A 315-amino-acid chain; its full sequence is Methionyl-tRNA formyltransferase (315 aa).

114 to 117 (SLLP) contributes to the (6S)-5,6,7,8-tetrahydrofolate binding site.

It belongs to the Fmt family.

The catalysed reaction is L-methionyl-tRNA(fMet) + (6R)-10-formyltetrahydrofolate = N-formyl-L-methionyl-tRNA(fMet) + (6S)-5,6,7,8-tetrahydrofolate + H(+). Attaches a formyl group to the free amino group of methionyl-tRNA(fMet). The formyl group appears to play a dual role in the initiator identity of N-formylmethionyl-tRNA by promoting its recognition by IF2 and preventing the misappropriation of this tRNA by the elongation apparatus. In Corynebacterium glutamicum (strain R), this protein is Methionyl-tRNA formyltransferase.